A 535-amino-acid polypeptide reads, in one-letter code: Arginine-containing cyclodipeptide synthase anoA (535 aa).

Residues 93-114 are disordered; sequence LLSPPREPGPIDSETKTREKKS. Basic and acidic residues predominate over residues 105–114; the sequence is SETKTREKKS. Positions 424–428 match the Conserved DDXXE motif motif; it reads DDIAE.

It belongs to the arginine-containing cyclodipeptide synthase family.

It carries out the reaction L-tryptophyl-tRNA(Trp) + L-arginyl-tRNA(Arg) = cyclo(L-arginyl-L-tryptophyl) + tRNA(Trp) + tRNA(Arg) + H(+). Its pathway is secondary metabolite biosynthesis. Its function is as follows. Arginine-containing cyclodipeptide synthase; part of the cluster that mediates the biosynthesis of a highly modified cyclo-arginine-tryptophan dipeptide (cRW). Within the pathway, AnoA acts as the scaffold-generating enzyme and is responsible for formation of the cyclo-Arg-Trp diketopiperazine (cRW) from L-arginyl-tRNA(Arg) + L-tryptophanyl-tRNA(Trp). Additional enzymes from the cluster then further modify the cyclo-Arg-Asp diketopiperazine (cRW) scaffold. The sequence is that of Arginine-containing cyclodipeptide synthase anoA from Aspergillus nomiae (Aspergillus nomius).